A 157-amino-acid chain; its full sequence is S-ribosylhomocysteine lyase (157 aa).

Residues H54, H58, and C126 each contribute to the Fe cation site.

It belongs to the LuxS family. Homodimer. It depends on Fe cation as a cofactor.

It catalyses the reaction S-(5-deoxy-D-ribos-5-yl)-L-homocysteine = (S)-4,5-dihydroxypentane-2,3-dione + L-homocysteine. Involved in the synthesis of autoinducer 2 (AI-2) which is secreted by bacteria and is used to communicate both the cell density and the metabolic potential of the environment. The regulation of gene expression in response to changes in cell density is called quorum sensing. Catalyzes the transformation of S-ribosylhomocysteine (RHC) to homocysteine (HC) and 4,5-dihydroxy-2,3-pentadione (DPD). The polypeptide is S-ribosylhomocysteine lyase (Bacillus cytotoxicus (strain DSM 22905 / CIP 110041 / 391-98 / NVH 391-98)).